Consider the following 141-residue polypeptide: Vesicle-associated membrane protein 4 (141 aa).

Positions 1 to 51 are disordered; it reads MPPKFKRHLNDDDVTGSVKSERRNLLEDDSDEEEDFFLRGPSGPRFGPRND. At 1–115 the chain is on the cytoplasmic side; that stretch reads MPPKFKRHLN…RRQMWWRGCK (115 aa). Residues Ser-17 and Ser-30 each carry the phosphoserine modification. The v-SNARE coiled-coil homology domain maps to 52–112; it reads KIKHVQNQVD…KQLRRQMWWR (61 aa). Residues 116–136 form a helical; Anchor for type IV membrane protein membrane-spanning segment; sequence IKAIMALVAVILLLVIIILIV. Over 137–141 the chain is Vesicular; the sequence is VKYRT.

Belongs to the synaptobrevin family. Identified in a complex containing STX6, STX12, VAMP4 and VTI1A. Interacts with BAIAP3; this interaction is increased in the presence of calcium.

The protein localises to the golgi apparatus. The protein resides in the trans-Golgi network membrane. Its function is as follows. Involved in the pathway that functions to remove an inhibitor (probably synaptotagmin-4) of calcium-triggered exocytosis during the maturation of secretory granules. May be a marker for this sorting pathway that is critical for remodeling the secretory response of granule. In Bos taurus (Bovine), this protein is Vesicle-associated membrane protein 4 (VAMP4).